A 941-amino-acid chain; its full sequence is Cilia- and flagella-associated protein 69 (941 aa).

Low complexity predominate over residues 1–14 (MWTEEAGATAEAQE). Residues 1–26 (MWTEEAGATAEAQESGIRNKSSSSSQ) are disordered. Positions 16–26 (GIRNKSSSSSQ) are enriched in polar residues.

As to expression, highly expressed in the testis, specifically in sperm (at protein level). Expressed in the brain, kidney, liver, lung, and intestine.

It localises to the cell projection. The protein resides in the cilium. It is found in the flagellum. Functionally, cilium- and flagellum-associated protein. In the olfactory epithelium, regulates the speed of activation and termination of the odor response and thus contributes to the robustness of olfactory transduction pathways. Required for sperm flagellum assembly and stability. The polypeptide is Cilia- and flagella-associated protein 69 (Homo sapiens (Human)).